The primary structure comprises 334 residues: D-fructose 1,6-bisphosphatase class 2/sedoheptulose 1,7-bisphosphatase (334 aa).

Mn(2+) contacts are provided by Asp-33, Glu-57, Asp-85, and Glu-88. Substrate contacts are provided by residues 88–90 (EGT), Tyr-119, 164–166 (RAR), and 186–188 (DGD). Glu-213 contributes to the Mn(2+) binding site.

This sequence belongs to the FBPase class 2 family. As to quaternary structure, homotetramer. Mn(2+) serves as cofactor.

It carries out the reaction beta-D-fructose 1,6-bisphosphate + H2O = beta-D-fructose 6-phosphate + phosphate. The catalysed reaction is D-sedoheptulose 1,7-bisphosphate + H2O = D-sedoheptulose 7-phosphate + phosphate. It participates in carbohydrate biosynthesis; Calvin cycle. In terms of biological role, catalyzes the hydrolysis of fructose 1,6-bisphosphate (Fru 1,6-P2) and sedoheptulose 1,7-bisphosphate (Sed 1,7-P2) to fructose 6-phosphate and sedoheptulose 7-phosphate, respectively. The sequence is that of D-fructose 1,6-bisphosphatase class 2/sedoheptulose 1,7-bisphosphatase from Prochlorococcus marinus (strain MIT 9313).